The sequence spans 101 residues: NADH-quinone oxidoreductase subunit K (101 aa).

A run of 3 helical transmembrane segments spans residues 4-24 (LAHY…GIFL), 30-50 (IIIL…FVAF), and 61-81 (IFVF…LAIL).

Belongs to the complex I subunit 4L family. In terms of assembly, NDH-1 is composed of 14 different subunits. Subunits NuoA, H, J, K, L, M, N constitute the membrane sector of the complex.

It is found in the cell inner membrane. The enzyme catalyses a quinone + NADH + 5 H(+)(in) = a quinol + NAD(+) + 4 H(+)(out). Its function is as follows. NDH-1 shuttles electrons from NADH, via FMN and iron-sulfur (Fe-S) centers, to quinones in the respiratory chain. The immediate electron acceptor for the enzyme in this species is believed to be ubiquinone. Couples the redox reaction to proton translocation (for every two electrons transferred, four hydrogen ions are translocated across the cytoplasmic membrane), and thus conserves the redox energy in a proton gradient. The sequence is that of NADH-quinone oxidoreductase subunit K from Burkholderia cenocepacia (strain HI2424).